We begin with the raw amino-acid sequence, 356 residues long: MRVTDFSFELPESLIAHYPMPERSSCRLLSLDGPTGALTHGTFTDLLDKLNPGDLLVFNNTRVIPARLFGRKASGGKIEVLVERMLDDKRILAHIRASKAPKPGAELLLGDDESINATMTARHGALFEVEFNDDRSVLDILNSIGHMPLPPYIDRPDEDADRELYQTVYSEKPGAVAAPTAGLHFDEPLLEKLRAKGVEMAFVTLHVGAGTFQPVRVDTIEDHIMHSEYAEVPQDMVDAVLAAKARGNRVIAVGTTSVRSLESAAQAAKNDLIEPFFDDTQIFIYPGFQYKVVDALVTNFHLPESTLIMLVSAFAGYQHTMNAYKAAVEEKYRFFSYGDAMFITYNPQAINERVGE.

It belongs to the QueA family. In terms of assembly, monomer.

It is found in the cytoplasm. It catalyses the reaction 7-aminomethyl-7-carbaguanosine(34) in tRNA + S-adenosyl-L-methionine = epoxyqueuosine(34) in tRNA + adenine + L-methionine + 2 H(+). It functions in the pathway tRNA modification; tRNA-queuosine biosynthesis. Functionally, transfers and isomerizes the ribose moiety from AdoMet to the 7-aminomethyl group of 7-deazaguanine (preQ1-tRNA) to give epoxyqueuosine (oQ-tRNA). The sequence is that of S-adenosylmethionine:tRNA ribosyltransferase-isomerase from Shigella boydii serotype 18 (strain CDC 3083-94 / BS512).